A 184-amino-acid polypeptide reads, in one-letter code: Photosystem I assembly protein Ycf4 (184 aa).

The next 2 membrane-spanning stretches (helical) occupy residues 19-39 (ISNF…LLVG) and 57-77 (IIFF…LFIS).

Belongs to the Ycf4 family.

It localises to the plastid. Its subcellular location is the chloroplast thylakoid membrane. Functionally, seems to be required for the assembly of the photosystem I complex. This is Photosystem I assembly protein Ycf4 from Nicotiana sylvestris (Wood tobacco).